The primary structure comprises 1146 residues: Probable transport protein MmpL12 (1146 aa).

The next 11 membrane-spanning stretches (helical) occupy residues 25–45, 206–226, 254–274, 298–318, 330–350, 382–402, 826–846, 850–870, 883–903, 928–948, and 949–969; these read LIVIGCWIAVAAALTLLLPTL, VSVLIILILVYRNLVTMLVPL, AIVFMSAVMIGAGTDYAVFLI, IGKVITASAATVAVTFLAMVF, AIAVAITVSLLGAVTLLPAIL, TIHLVGSLIVLVALAGCTLLI, FIVIATIVIVFLILVILLRAL, IYLIGSVLISYLSALGIGTLV, LPGLSFILLVAIGADYNMLLI, VITSAGLIFAASMFGLVGASI, and NTMAQAGFTIGIGIVLDTFLV.

Belongs to the resistance-nodulation-cell division (RND) (TC 2.A.6) family. MmpL subfamily.

The protein localises to the cell membrane. The chain is Probable transport protein MmpL12 (mmpL12) from Mycobacterium tuberculosis (strain CDC 1551 / Oshkosh).